Here is a 201-residue protein sequence, read N- to C-terminus: Small ribosomal subunit protein uS4c (201 aa).

Positions 89 to 157 (MRLDNILFRL…VQNYIASSDP (69 aa)) constitute an S4 RNA-binding domain.

Belongs to the universal ribosomal protein uS4 family. Part of the 30S ribosomal subunit. Contacts protein S5. The interaction surface between S4 and S5 is involved in control of translational fidelity.

The protein localises to the plastid. Its subcellular location is the chloroplast. Functionally, one of the primary rRNA binding proteins, it binds directly to 16S rRNA where it nucleates assembly of the body of the 30S subunit. In terms of biological role, with S5 and S12 plays an important role in translational accuracy. This Triticum aestivum (Wheat) protein is Small ribosomal subunit protein uS4c (rps4).